Consider the following 897-residue polypeptide: Serine/threonine-protein kinase ATG1 (897 aa).

Positions 24–325 (YTAEKEIGKG…FEEFFANKVV (302 aa)) constitute a Protein kinase domain. Residues 30–38 (IGKGSFATV) and K54 each bind ATP. S34 carries the phosphoserine modification. T129 is modified (phosphothreonine). D172 functions as the Proton acceptor in the catalytic mechanism. Phosphothreonine; by autocatalysis is present on T226. Residues S304, S365, and S390 each carry the phosphoserine modification. Residues 429-432 (YVVV) carry the LIR motif. The tract at residues 490–509 (LLRATSSSSGGSDGSRRPSL) is disordered. A phosphoserine; by PKA mark is found at S508 and S515. S533, S551, and S552 each carry phosphoserine. Phosphothreonine is present on T590. A phosphoserine mark is found at S621, S635, S638, S647, S677, S680, S683, S769, and S783. A required for Cvt trafficking region spans residues 880–886 (DSIANRL).

This sequence belongs to the protein kinase superfamily. Ser/Thr protein kinase family. APG1/unc-51/ULK1 subfamily. As to quaternary structure, homodimer. Dimerization requires the presence of ATG13. Forms a ternary complex with ATG13 and ATG17. Also interacts with ATG11. Autophosphorylated at Thr-226 and Ser-390. The phosphorylation state may play a role in the induction of protein degradation upon starvation. Phosphorylation at Thr-226 within the activation loop is required for protein kinase activity whereas phosphorylation at Ser-34 leads to inhibition of kinase activity. Phosphorylation of Ser-508 and Ser-515 by PKA is required to induce autophagy but not for kinase activity.

Its subcellular location is the cytoplasm. It is found in the preautophagosomal structure membrane. It catalyses the reaction L-seryl-[protein] + ATP = O-phospho-L-seryl-[protein] + ADP + H(+). It carries out the reaction L-threonyl-[protein] + ATP = O-phospho-L-threonyl-[protein] + ADP + H(+). With respect to regulation, activated by hypophosphorylated form of ATG13 (present in nitrogen starvation conditions). Also activated by autophopsphorylation of Thr-226 and inhibited by phosphorylation of Ser-34. In terms of biological role, serine/threonine protein kinase involved in the cytoplasm to vacuole transport (Cvt) and found to be essential in autophagy, where it is required for the formation of autophagosomes. Involved in the clearance of protein aggregates which cannot be efficiently cleared by the proteasome. Required for selective autophagic degradation of the nucleus (nucleophagy) as well as for mitophagy which contributes to regulate mitochondrial quantity and quality by eliminating the mitochondria to a basal level to fulfill cellular energy requirements and preventing excess ROS production. Also involved in endoplasmic reticulum-specific autophagic process, in selective removal of ER-associated degradation (ERAD) substrates. Plays a key role in ATG9 and ATG23 cycling through the pre-autophagosomal structure and is necessary to promote ATG18 binding to ATG9 through phosphorylation of ATG9. Catalyzes phosphorylation of ATG4, decreasing the interaction between ATG4 and ATG8 and impairing deconjugation of PE-conjugated forms of ATG8. Finally, ATG1 is also required for the maintenance of cell viability under starvation and for glycogen storage during stationary phase. Plays a role in genome stability through suppression of abnormal mitosis under starvation, and in regulation of filamentous growth. The protein is Serine/threonine-protein kinase ATG1 of Saccharomyces cerevisiae (strain YJM789) (Baker's yeast).